The following is a 510-amino-acid chain: MKKVIIRKTEEIENWRRNINSEINFIPTMGNLHDGHIKLISTAKNDNSNVNLVSIFINPLQFDNKLDLENYPQTIDNDIKISFSNGADAIFIPSYEDIYPPNNKNIKFLKAPKELSSALCGLNRIGHFDGVCTVVYRLLNLIKPKNLYLGEKDWQQLLILKNLVLRKNLNVAIRSIPTQRDFDGIPLSSRNVHLSKNERKLISFFSSELLEAKKIFQQDKKINLNQIIKKLSAKKISVEYLEHLHPHTLQKARPEDNISLLAGAIRCGETRLIDHVFLMKRRPIIAIDGPAGSGKSTVTKLIAKKLNLLYLDTGAMYRALSWLIIKESVDYKIEKKLQNILKDISIFFKSNTNSHQDVYVNNYCVTKEIRSQKISSIVSKISSIKEVRKFLVAEQRKIGESGGLVAEGRDIGTTVFPHAELKIFLTASIDERAKRRKYDKNSKDSQEIDLYTLKELIKKRDFEDSNREISPLIKANDAIEIITDGYTIDEVVDKIIDLYNDRIPKETEIK.

The interval 1–276 (MKKVIIRKTE…CGETRLIDHV (276 aa)) is pantoate--beta-alanine ligase. Residue 29-36 (MGNLHDGH) coordinates ATP. The active-site Proton donor is His-36. Position 61 (Gln-61) interacts with (R)-pantoate. Residue Gln-61 coordinates beta-alanine. 150 to 153 (GEKD) lines the ATP pocket. Gln-156 contacts (R)-pantoate. ATP is bound at residue 187–190 (LSSR). Residues 277-510 (FLMKRRPIIA…DRIPKETEIK (234 aa)) are cytidylate kinase.

It in the N-terminal section; belongs to the pantothenate synthetase family. The protein in the C-terminal section; belongs to the cytidylate kinase family. Type 1 subfamily.

It is found in the cytoplasm. It carries out the reaction (R)-pantoate + beta-alanine + ATP = (R)-pantothenate + AMP + diphosphate + H(+). It catalyses the reaction CMP + ATP = CDP + ADP. The enzyme catalyses dCMP + ATP = dCDP + ADP. Its pathway is cofactor biosynthesis; (R)-pantothenate biosynthesis; (R)-pantothenate from (R)-pantoate and beta-alanine: step 1/1. Its function is as follows. Catalyzes the condensation of pantoate with beta-alanine in an ATP-dependent reaction via a pantoyl-adenylate intermediate. In terms of biological role, catalyzes the transfer of a phosphate group from ATP to either CMP or dCMP to form CDP or dCDP and ADP, respectively. This is Bifunctional pantoate ligase/cytidylate kinase from Prochlorococcus marinus (strain MIT 9301).